A 1003-amino-acid chain; its full sequence is cGMP-dependent protein kinase (1003 aa).

A disordered region spans residues 1–141 (MGACSSKAQH…KAIKQQEDTQ (141 aa)). Residue G2 is the site of N-myristoyl glycine attachment. Residue C4 is the site of S-palmitoyl cysteine attachment. Low complexity predominate over residues 69–85 (EQQQQQQQQQQQQQEQQ). 2 stretches are compositionally biased toward basic and acidic residues: residues 86–109 (QHPE…ERKP) and 127–141 (ERKV…EDTQ). 4 cNMP-binding domain regions span residues 173-289 (VCSS…FLAS), 292-391 (FFEM…RVLG), 411-548 (VFAS…ATLG), and 570-669 (IFRY…LQIV). 4 residues coordinate 3',5'-cyclic GMP: G237, E238, R247, and T248. The 3',5'-cyclic GMP site is built by R625, G634, E635, A637, R644, and S645. One can recognise a Protein kinase domain in the interval 693–950 (LNVVRVVGRG…YKDIKEHAFF (258 aa)). Residues 699–707 (VGRGTFGTV) and K722 contribute to the ATP site. The active-site Proton acceptor is D816. The region spanning 951–1003 (SDFDWDRLAGRDLSPPLLPKGEIYAEDAEEGGLDIEEDEGIELEDEYEWDKDF) is the AGC-kinase C-terminal domain.

The protein belongs to the protein kinase superfamily. AGC Ser/Thr protein kinase family. cGMP subfamily. Monomer. It depends on Mg(2+) as a cofactor.

The protein localises to the cell membrane. The protein resides in the cytoplasm. It catalyses the reaction L-seryl-[protein] + ATP = O-phospho-L-seryl-[protein] + ADP + H(+). The enzyme catalyses L-threonyl-[protein] + ATP = O-phospho-L-threonyl-[protein] + ADP + H(+). Its activity is regulated as follows. Activated by cGMP. The cGMP-binding domains acts cooperatively to activate PKG. Inhibited by the antiparasitic small molecule 4-[2-(4-fluorophenyl)-5-(1-methylpiperidine-4-yl)-1Hpyrrol- 3-yl]pyridine (compound 1). Functionally, serine/threonine protein kinase which acts as a downstream effector of the second messenger cGMP. The protein is cGMP-dependent protein kinase of Eimeria tenella (Coccidian parasite).